A 64-amino-acid chain; its full sequence is Small ribosomal subunit protein bS21 (64 aa).

This sequence belongs to the bacterial ribosomal protein bS21 family.

In Anaeromyxobacter dehalogenans (strain 2CP-1 / ATCC BAA-258), this protein is Small ribosomal subunit protein bS21.